The primary structure comprises 293 residues: ATP synthase gamma chain (293 aa).

It belongs to the ATPase gamma chain family. In terms of assembly, F-type ATPases have 2 components, CF(1) - the catalytic core - and CF(0) - the membrane proton channel. CF(1) has five subunits: alpha(3), beta(3), gamma(1), delta(1), epsilon(1). CF(0) has three main subunits: a, b and c.

The protein resides in the cell inner membrane. Produces ATP from ADP in the presence of a proton gradient across the membrane. The gamma chain is believed to be important in regulating ATPase activity and the flow of protons through the CF(0) complex. This chain is ATP synthase gamma chain, found in Nitratidesulfovibrio vulgaris (strain DSM 19637 / Miyazaki F) (Desulfovibrio vulgaris).